A 148-amino-acid chain; its full sequence is Ribonuclease 4 (148 aa).

A signal peptide spans 1–29 (MMDLQRTQSLLLLLVLTLLGLGLVQPSYG). At Gln-30 the chain carries Pyrrolidone carboxylic acid. 5 residues coordinate dUMP: Arg-36, His-41, Lys-69, Asn-72, and Thr-73. His-41 acts as the Proton acceptor in catalysis. 4 disulfides stabilise this stretch: Cys-54–Cys-110, Cys-68–Cys-121, Cys-86–Cys-136, and Cys-93–Cys-100. The active-site Proton donor is the His-145. DUMP is bound at residue Phe-146.

It belongs to the pancreatic ribonuclease family. As to expression, expressed in the cortical tubules of the kidney (at protein level). Also expressed in the medullary tubules of the kidney.

It localises to the secreted. In terms of biological role, cleaves preferentially after uridine bases. Has antimicrobial activity against uropathogenic E.coli (UPEC). Probably contributes to urinary tract sterility. In Mus musculus (Mouse), this protein is Ribonuclease 4 (Rnase4).